The following is a 521-amino-acid chain: Beta-glucosidase 11 (521 aa).

The signal sequence occupies residues 1–23 (MKLLSNSLMFLPLLALALTAVSS). A beta-D-glucoside is bound by residues Gln-45, His-144, and 189–190 (NE). Catalysis depends on Glu-190, which acts as the Proton donor. Cys-209 and Cys-217 are disulfide-bonded. Asn-216 and Asn-221 each carry an N-linked (GlcNAc...) asparagine glycan. Tyr-356 lines the a beta-D-glucoside pocket. N-linked (GlcNAc...) asparagine glycosylation is found at Asn-364 and Asn-388. 3 residues coordinate a beta-D-glucoside: Glu-422, Trp-466, and Phe-482. The Nucleophile role is filled by Glu-422.

It belongs to the glycosyl hydrolase 1 family.

The enzyme catalyses Hydrolysis of terminal, non-reducing beta-D-glucosyl residues with release of beta-D-glucose.. The chain is Beta-glucosidase 11 from Arabidopsis thaliana (Mouse-ear cress).